A 243-amino-acid polypeptide reads, in one-letter code: 4-phosphopantoate--beta-alanine ligase (243 aa).

Residues Arg-15, Arg-37, 176–178 (DLN), and 182–183 (RT) each bind ATP.

This sequence belongs to the archaeal phosphopantothenate synthetase family. In terms of assembly, homodimer.

The enzyme catalyses (R)-4-phosphopantoate + beta-alanine + ATP = (R)-4'-phosphopantothenate + AMP + diphosphate + H(+). It participates in cofactor biosynthesis; coenzyme A biosynthesis. In terms of biological role, catalyzes the condensation of (R)-4-phosphopantoate and beta-alanine to 4'-phosphopantothenate in the CoA biosynthesis pathway. The protein is 4-phosphopantoate--beta-alanine ligase of Methanospirillum hungatei JF-1 (strain ATCC 27890 / DSM 864 / NBRC 100397 / JF-1).